The primary structure comprises 497 residues: Ganglioside-induced differentiation-associated protein 2 (497 aa).

Residues Arg43–Phe223 form the Macro domain. The segment at Glu252 to Glu273 is disordered. A compositionally biased stretch (basic and acidic residues) spans Arg253–Ala263. Ser280 carries the phosphoserine modification. Positions Asp333–Ala481 constitute a CRAL-TRIO domain.

This sequence belongs to the GDAP2 family.

The protein is Ganglioside-induced differentiation-associated protein 2 (GDAP2) of Homo sapiens (Human).